The primary structure comprises 237 residues: MOB kinase activator 2 (237 aa).

The interval 1 to 21 (MDWLMGKSKAKPNGKKPAAEE) is disordered. Zn(2+) contacts are provided by C78, C83, H157, and H162. A compositionally biased stretch (gly residues) spans 217-229 (GGSGDGAGSGGPG). Residues 217–237 (GGSGDGAGSGGPGAQNHVKER) are disordered.

This sequence belongs to the MOB1/phocein family. As to quaternary structure, binds STK38 and STK38L. In terms of processing, phosphorylated.

It localises to the nucleus. Its subcellular location is the cytoplasm. It is found in the perinuclear region. In terms of biological role, stimulates the autophosphorylation and kinase activity of STK38 and STK38L. The sequence is that of MOB kinase activator 2 (MOB2) from Homo sapiens (Human).